The primary structure comprises 470 residues: ATP synthase subunit beta (470 aa).

ATP is bound at residue 155–162 (GGAGVGKT).

It belongs to the ATPase alpha/beta chains family. As to quaternary structure, F-type ATPases have 2 components, CF(1) - the catalytic core - and CF(0) - the membrane proton channel. CF(1) has five subunits: alpha(3), beta(3), gamma(1), delta(1), epsilon(1). CF(0) has three main subunits: a(1), b(2) and c(9-12). The alpha and beta chains form an alternating ring which encloses part of the gamma chain. CF(1) is attached to CF(0) by a central stalk formed by the gamma and epsilon chains, while a peripheral stalk is formed by the delta and b chains.

It is found in the cell membrane. The catalysed reaction is ATP + H2O + 4 H(+)(in) = ADP + phosphate + 5 H(+)(out). Produces ATP from ADP in the presence of a proton gradient across the membrane. The catalytic sites are hosted primarily by the beta subunits. In Pectinatus frisingensis, this protein is ATP synthase subunit beta.